The chain runs to 201 residues: Ras-related protein Rab-1B (201 aa).

Met1 is subject to N-acetylmethionine. Ser17, Gly18, Val19, Gly20, Lys21, Ser22, Cys23, Tyr33, Thr34, Glu35, Ser36, Ser39, and Thr40 together coordinate GTP. A Mg(2+)-binding site is contributed by Ser22. The Switch 1 signature appears at 30–45 (DDTYTESYISTIGVDF). Residues Thr40 and Asp63 each coordinate Mg(2+). The tract at residues 64-83 (TAGQERGRTITSSYYRGAHG) is switch 2 region; required for interaction with REP1/CHM. The short motif at 65 to 80 (AGQERGRTITSSYYRG) is the Switch 2 element. Residues Gly66, Asn121, Lys122, Asp124, Ser151, Ala152, and Lys153 each coordinate GTP. Positions 173–201 (MGPGAASGGERPNLKIDSTPVKQAGGGCC) are disordered. Residues Cys200 and Cys201 are each lipidated (S-geranylgeranyl cysteine). Cys201 is subject to Cysteine methyl ester.

The protein belongs to the small GTPase superfamily. Rab family. As to quaternary structure, interacts with MICAL1 and MICAL2. Interacts (in GTP-bound form) with MICALCL, MICAL1 and MILCAL3. Interacts with GDI1; the interaction requires the GDP-bound state. Interacts with CHM/REP1; the interaction requires the GDP-bound form and is necessary for prenylation by GGTase II. Interacts with RabGAP TBC1D20. Interacts (in GDP-bound form) with lipid phosphatase MTMR6 (via GRAM domain); the interaction regulates MTMR6 recruitment to the endoplasmic reticulum-Golgi intermediate compartment. Interacts (in GDP-bound form) with lipid phosphatase MTMR7. Mg(2+) is required as a cofactor. Prenylated; by GGTase II, only after interaction of the substrate with Rab escort protein 1 (REP1).

The protein resides in the cytoplasm. It localises to the membrane. It is found in the preautophagosomal structure membrane. Its subcellular location is the perinuclear region. The catalysed reaction is GTP + H2O = GDP + phosphate + H(+). Regulated by guanine nucleotide exchange factors (GEFs) which promote the exchange of bound GDP for free GTP. Regulated by GTPase activating proteins (GAPs) including TBC1D20 which increases the GTP hydrolysis activity. Inhibited by GDP dissociation inhibitors (GDIs). In terms of biological role, the small GTPases Rab are key regulators of intracellular membrane trafficking, from the formation of transport vesicles to their fusion with membranes. Rabs cycle between an inactive GDP-bound form and an active GTP-bound form that is able to recruit to membranes different set of downstream effectors directly responsible for vesicle formation, movement, tethering and fusion. Plays a role in the initial events of the autophagic vacuole development which take place at specialized regions of the endoplasmic reticulum. Regulates vesicular transport between the endoplasmic reticulum and successive Golgi compartments. Required to modulate the compacted morphology of the Golgi. Promotes the recruitment of lipid phosphatase MTMR6 to the endoplasmic reticulum-Golgi intermediate compartment. The protein is Ras-related protein Rab-1B (RAB1B) of Sus scrofa (Pig).